The sequence spans 452 residues: GTPase Der (452 aa).

2 EngA-type G domains span residues 4–169 and 177–352; these read PIVA…PPPE and IKVA…EEHR. GTP contacts are provided by residues 10-17, 57-61, 120-123, 183-190, 230-234, and 295-298; these read GRPNVGKS, DTGGL, NKCE, DTAGI, and NKWD. The region spanning 353–438 is the KH-like domain; that stretch reads RRVTTAVINE…PIRLLWRGKK (86 aa).

This sequence belongs to the TRAFAC class TrmE-Era-EngA-EngB-Septin-like GTPase superfamily. EngA (Der) GTPase family. Associates with the 50S ribosomal subunit.

GTPase that plays an essential role in the late steps of ribosome biogenesis. The protein is GTPase Der of Rippkaea orientalis (strain PCC 8801 / RF-1) (Cyanothece sp. (strain PCC 8801)).